Here is a 330-residue protein sequence, read N- to C-terminus: MKTAYIAKQRQISFVKSHFSRQLEERLGLIEVQAPILSRVGDGTQDNLSGCEKAVQVKVKALPDAQFEVVHSLAKWKRQTLGQHDFSAGEGLYTHMKALRPDEDRLSPLHSVYVDQWDWERVMGDGERQFSTLKSTVEAIWAGIKATEAEVHKQFGLAPFLPEQIQFVHSQELLSRYPDLDAKGRERAIAKELGAVFLVGIGGKLSDGHRHDVRAPDYDDWSSASELGYAGLNGDILVWNPVLEDAFELSSMGIRVDADTLMRQLALTGDEDRLQLVWHQALLRGEMPQTIGGGIGQSRLTMLLLQLPHIGQVQCGVWPAQVRESIPAIL.

This sequence belongs to the class-II aminoacyl-tRNA synthetase family. AsnA subfamily.

It localises to the cytoplasm. It catalyses the reaction L-aspartate + NH4(+) + ATP = L-asparagine + AMP + diphosphate + H(+). It participates in amino-acid biosynthesis; L-asparagine biosynthesis; L-asparagine from L-aspartate (ammonia route): step 1/1. The chain is Aspartate--ammonia ligase from Salmonella agona (strain SL483).